We begin with the raw amino-acid sequence, 228 residues long: MHIERLDFENSPYLGVYGFATDRVAVIREGLGEKKLATLREVLKVPLIETSVMKSRIVGIFVAGNSNALIVPWYIWDAELDFINAQLREYGIDMEVVPFQSRLTAFGNLILANDKGALVSKDFTREEARKIEDILGVPVERGVIADYTAVGSVGVVTNKGGLVHPEATDEELEWLSDLFKVDVYVGTANMGVPFVGSCMIANSYGVVVGHLTTGPEIVKIEEALGFLG.

Belongs to the eIF-6 family.

Functionally, binds to the 50S ribosomal subunit and prevents its association with the 30S ribosomal subunit to form the 70S initiation complex. The protein is Translation initiation factor 6 of Thermococcus gammatolerans (strain DSM 15229 / JCM 11827 / EJ3).